A 174-amino-acid chain; its full sequence is Variant surface antigen B (174 aa).

Positions Met-1–Ser-29 are cleaved as a signal peptide. A lipid anchor (N-palmitoyl cysteine) is attached at Cys-30. The S-diacylglycerol cysteine moiety is linked to residue Cys-30. The segment at Gln-32 to Lys-174 is disordered. Residues Ser-38–Gly-49 are compositionally biased toward low complexity. Residues Gly-50–Gly-75 show a composition bias toward gly residues. Residues Ser-76 to Gly-97 are compositionally biased toward low complexity. Tandem repeats lie at residues Gly-88–Lys-99, Gly-100–Lys-111, Gly-112–Lys-123, Gly-124–Lys-135, Gly-136–Lys-147, Gly-148–Lys-159, and Gly-160–Gly-171. The segment at Gly-88–Gly-171 is 7 X 12 AA tandem repeats. Residues Gly-102–Lys-174 are compositionally biased toward polar residues.

Its subcellular location is the cell membrane. Responsible for the antigenic diversity for host adaptation. The chain is Variant surface antigen B (vlpB) from Mesomycoplasma hyorhinis (Mycoplasma hyorhinis).